The sequence spans 237 residues: Uridylate kinase (237 aa).

ATP is bound at residue 12 to 15 (KLSG). The segment at 20 to 25 (GEDGLG) is involved in allosteric activation by GTP. G54 contacts UMP. Residues G55 and R59 each coordinate ATP. Residues D74 and 135–142 (TGNPFFTT) contribute to the UMP site. 3 residues coordinate ATP: T162, Y168, and D171.

It belongs to the UMP kinase family. Homohexamer.

The protein localises to the cytoplasm. The enzyme catalyses UMP + ATP = UDP + ADP. It functions in the pathway pyrimidine metabolism; CTP biosynthesis via de novo pathway; UDP from UMP (UMPK route): step 1/1. Its activity is regulated as follows. Allosterically activated by GTP. Inhibited by UTP. In terms of biological role, catalyzes the reversible phosphorylation of UMP to UDP. The polypeptide is Uridylate kinase (pyrH) (Haemophilus influenzae (strain ATCC 51907 / DSM 11121 / KW20 / Rd)).